The sequence spans 647 residues: UvrABC system protein C (647 aa).

Residues 16 to 95 enclose the GIY-YIG domain; it reads VEPGVYRFRD…IKEFDPRFNV (80 aa). A UVR domain is found at 208–243; the sequence is DRFARELEQQMNAAAAELDFERAARLRDDLGALKRA.

It belongs to the UvrC family. As to quaternary structure, interacts with UvrB in an incision complex.

Its subcellular location is the cytoplasm. Functionally, the UvrABC repair system catalyzes the recognition and processing of DNA lesions. UvrC both incises the 5' and 3' sides of the lesion. The N-terminal half is responsible for the 3' incision and the C-terminal half is responsible for the 5' incision. The polypeptide is UvrABC system protein C (Mycolicibacterium paratuberculosis (strain ATCC BAA-968 / K-10) (Mycobacterium paratuberculosis)).